Here is a 264-residue protein sequence, read N- to C-terminus: Undecaprenyl-diphosphatase (264 aa).

The next 7 helical transmembrane spans lie at 42–62 (ESLLFTVVLHFATALSTLVVF), 82–102 (TQFSLKIIISMLPAVIVGLLF), 109–129 (LFGGNILFVGFMLLITALLLW), 146–166 (AFIIGVSQAIAMLPGISRSGA), 184–204 (FSFLMVVPLIFGKIAKDLMSG), 215–235 (ILATGFIAAFLAGLVACTWMI), and 243–263 (LSWFAIYCFVVGLAAIIFAYA).

This sequence belongs to the UppP family.

The protein resides in the cell membrane. It carries out the reaction di-trans,octa-cis-undecaprenyl diphosphate + H2O = di-trans,octa-cis-undecaprenyl phosphate + phosphate + H(+). Its function is as follows. Catalyzes the dephosphorylation of undecaprenyl diphosphate (UPP). Confers resistance to bacitracin. The sequence is that of Undecaprenyl-diphosphatase from Christiangramia forsetii (strain DSM 17595 / CGMCC 1.15422 / KT0803) (Gramella forsetii).